Consider the following 86-residue polypeptide: Small ribosomal subunit protein bS16 (86 aa).

This sequence belongs to the bacterial ribosomal protein bS16 family.

The protein is Small ribosomal subunit protein bS16 of Borreliella burgdorferi (strain ATCC 35210 / DSM 4680 / CIP 102532 / B31) (Borrelia burgdorferi).